The following is an 89-amino-acid chain: Large ribosomal subunit protein bL27 (89 aa).

The segment at 1 to 21 is disordered; that stretch reads MAHKKAGGSSRNGRDSESKRL.

The protein belongs to the bacterial ribosomal protein bL27 family.

The chain is Large ribosomal subunit protein bL27 from Brucella anthropi (strain ATCC 49188 / DSM 6882 / CCUG 24695 / JCM 21032 / LMG 3331 / NBRC 15819 / NCTC 12168 / Alc 37) (Ochrobactrum anthropi).